The chain runs to 307 residues: Undecaprenyl-diphosphatase (307 aa).

The next 6 helical transmembrane spans lie at Ala-40 to Phe-60, Leu-79 to Phe-99, Leu-107 to Val-127, Ala-183 to Phe-203, Ile-219 to Val-239, and Leu-249 to Ala-269.

It belongs to the UppP family.

It is found in the cell inner membrane. It carries out the reaction di-trans,octa-cis-undecaprenyl diphosphate + H2O = di-trans,octa-cis-undecaprenyl phosphate + phosphate + H(+). Catalyzes the dephosphorylation of undecaprenyl diphosphate (UPP). Confers resistance to bacitracin. The protein is Undecaprenyl-diphosphatase of Sorangium cellulosum (strain So ce56) (Polyangium cellulosum (strain So ce56)).